The following is a 116-amino-acid chain: Phosphoribosyl-AMP cyclohydrolase (116 aa).

D82 is a Mg(2+) binding site. Residue C83 participates in Zn(2+) binding. The Mg(2+) site is built by D84 and D86. 2 residues coordinate Zn(2+): C99 and C106.

The protein belongs to the PRA-CH family. Homodimer. It depends on Mg(2+) as a cofactor. Requires Zn(2+) as cofactor.

The protein resides in the cytoplasm. The catalysed reaction is 1-(5-phospho-beta-D-ribosyl)-5'-AMP + H2O = 1-(5-phospho-beta-D-ribosyl)-5-[(5-phospho-beta-D-ribosylamino)methylideneamino]imidazole-4-carboxamide. Its pathway is amino-acid biosynthesis; L-histidine biosynthesis; L-histidine from 5-phospho-alpha-D-ribose 1-diphosphate: step 3/9. Its function is as follows. Catalyzes the hydrolysis of the adenine ring of phosphoribosyl-AMP. This chain is Phosphoribosyl-AMP cyclohydrolase, found in Saccharopolyspora erythraea (strain ATCC 11635 / DSM 40517 / JCM 4748 / NBRC 13426 / NCIMB 8594 / NRRL 2338).